Reading from the N-terminus, the 146-residue chain is uncharacterized protein (146 aa).

This is an uncharacterized protein from Acidianus filamentous virus 2 (isolate Italy/Pozzuoli) (AFV-2).